The sequence spans 343 residues: Arginine-hydroxylase NDUFAF5, mitochondrial (343 aa).

Residues 1 to 29 (MLRRVVLSRLYARLGGPAVSAGRGGRRGV) constitute a mitochondrion transit peptide. The interval 18–40 (AVSAGRGGRRGVASSVPPSGSTS) is disordered.

The protein belongs to the methyltransferase superfamily. As to quaternary structure, interacts with NDUFAF8, leading to stabilize NDUFAF5. Interacts with NDUFS7. Interacts with PYURF (via TRM112 domain); the interaction is direct and stabilizes NDUFAF5 protein.

Its subcellular location is the mitochondrion inner membrane. Arginine hydroxylase that mediates hydroxylation of 'Arg-111' of NDUFS7 and is involved in the assembly of mitochondrial NADH:ubiquinone oxidoreductase complex (complex I, MT-ND1) at early stages. May also have methyltransferase activity. This is Arginine-hydroxylase NDUFAF5, mitochondrial from Rattus norvegicus (Rat).